Reading from the N-terminus, the 428-residue chain is MTRSDELFEQAKKTIPGGVNSPVRAFNGVGGSPRFIDKADGAYIYDADGKAYIDYVGSWGPMILGHNHPKIRQAVLEAVENGLSFGAPTELEVKMAEKVIEMVPSMEQVRMVSSGTEATMSAIRLARGFTNRDKILKFEGCYHGHADCLLVKAGSGALTLGQPSSPGIPEDFAKHTLTATYNELESVKTLFEQYPEEISCIILEPVAGNMNCIPPVEGFLEGLRAICDQYGALLIIDEVMTGFRVSKSGAQGHYGITPDLTTLGKVIGGGMPVGAFGGRKDVMQFIAPTGPVYQAGTLSGNPIAMSAGLAQMEELCAEGLYQELAAKTKRIAEGFKAAANKHGIPMSINYVGGMFGFFFTEEEKVTRFDQVTQCDAEKFPEFYHGMLDEGVYLAPSAYEAGFLSMAHGEKELEETLAAAERVFAKMAK.

Lysine 265 is subject to N6-(pyridoxal phosphate)lysine.

The protein belongs to the class-III pyridoxal-phosphate-dependent aminotransferase family. HemL subfamily. In terms of assembly, homodimer. Pyridoxal 5'-phosphate is required as a cofactor.

The protein localises to the cytoplasm. The enzyme catalyses (S)-4-amino-5-oxopentanoate = 5-aminolevulinate. Its pathway is porphyrin-containing compound metabolism; protoporphyrin-IX biosynthesis; 5-aminolevulinate from L-glutamyl-tRNA(Glu): step 2/2. This is Glutamate-1-semialdehyde 2,1-aminomutase from Shewanella woodyi (strain ATCC 51908 / MS32).